We begin with the raw amino-acid sequence, 229 residues long: MNGAVPMLAIDGPSGAGKGTVAGLLARRLGWNLLDSGALYRLLAFAAVNHGVDLTNEEALKVLAAHLDVQFVAADGSHGQRIILEGEEVTDVIRTEQVGAGASQVAALPAVRDALLQRQRAFREAPGLVADGRDMGTVVFPDAPLKIFLTASAEERARRRYLQLKAKGADVDQSALLEEIRERDERDSQRAVAPLKPADDAILLDSTEMSIEAVVETIIRHCERQGWDV.

ATP is bound at residue 12–20 (GPSGAGKGT).

Belongs to the cytidylate kinase family. Type 1 subfamily.

The protein resides in the cytoplasm. It catalyses the reaction CMP + ATP = CDP + ADP. The enzyme catalyses dCMP + ATP = dCDP + ADP. The polypeptide is Cytidylate kinase (Pseudomonas aeruginosa (strain UCBPP-PA14)).